We begin with the raw amino-acid sequence, 1119 residues long: SH3 and PX domain-containing protein 2A (1119 aa).

One can recognise a PX domain in the interval 4 to 128 (RTVLDVKVVD…RFFETKPDDI (125 aa)). 2 SH3 domains span residues 149–208 (MVLE…SQSG) and 249–308 (SREE…KLKD). Disordered stretches follow at residues 388–429 (SSAT…PPRR), 494–595 (APSS…SNPA), 641–815 (SSDD…HESV), 914–941 (NLRSMSNPSPPIPSKPPGGFSKPTAMLN), and 957–1004 (RPQS…SSFT). The SH3 3 domain occupies 445–504 (TVEAEYYTIAEFQSSISDGISFRGGQKADVIEKNSGGWWYVQIGDTEGWAPSSYIDKRKK). Basic and acidic residues-rich tracts occupy residues 581 to 590 (PKPEPRKFEI) and 688 to 718 (GRAERHSSKLFSDESARNPKREPVMRKDVEI). A compositionally biased stretch (low complexity) spans 779 to 802 (TASVVSSEDSTSSRSTSDLSSVYS). Positions 806-815 (RGGESDHESV) are enriched in basic and acidic residues. The SH3 4 domain maps to 812-871 (HESVLFRTTDAYERAQESELSFPAGVEVEVLEKQESGWWFVRWGSDEGWVPTFYLEPIKH). The SH3 5 domain occupies 1058–1119 (NLREVYVSIA…VPSNYLERKK (62 aa)).

The protein belongs to the SH3PXD2 family. In terms of processing, tyrosine phosphorylated.

The protein resides in the cytoplasm. Its subcellular location is the cell projection. It localises to the podosome. In terms of biological role, adapter protein involved in invadopodia and podosome formation and extracellular matrix degradation. The polypeptide is SH3 and PX domain-containing protein 2A (sh3pxd2a) (Danio rerio (Zebrafish)).